An 88-amino-acid polypeptide reads, in one-letter code: Apolipoprotein C-I (88 aa).

An N-terminal signal peptide occupies residues Met1–Ala26.

This sequence belongs to the apolipoprotein C1 family.

The protein resides in the secreted. Functionally, inhibitor of lipoprotein binding to the low density lipoprotein (LDL) receptor, LDL receptor-related protein, and very low density lipoprotein (VLDL) receptor. Associates with high density lipoproteins (HDL) and the triacylglycerol-rich lipoproteins in the plasma and makes up about 10% of the protein of the VLDL and 2% of that of HDL. Appears to interfere directly with fatty acid uptake and is also the major plasma inhibitor of cholesteryl ester transfer protein (CETP). Modulates the interaction of APOE with beta-migrating VLDL and inhibits binding of beta-VLDL to the LDL receptor-related protein. Binds free fatty acids and reduces their intracellular esterification. This Mesocricetus auratus (Golden hamster) protein is Apolipoprotein C-I (APOC1).